The sequence spans 145 residues: 3-hydroxyacyl-[acyl-carrier-protein] dehydratase FabZ (145 aa).

Residue H49 is part of the active site.

The protein belongs to the thioester dehydratase family. FabZ subfamily.

Its subcellular location is the cytoplasm. The catalysed reaction is a (3R)-hydroxyacyl-[ACP] = a (2E)-enoyl-[ACP] + H2O. Its function is as follows. Involved in unsaturated fatty acids biosynthesis. Catalyzes the dehydration of short chain beta-hydroxyacyl-ACPs and long chain saturated and unsaturated beta-hydroxyacyl-ACPs. This is 3-hydroxyacyl-[acyl-carrier-protein] dehydratase FabZ from Anaplasma phagocytophilum (strain HZ).